The sequence spans 539 residues: CTP synthase (539 aa).

The tract at residues 1 to 268 is amidoligase domain; that stretch reads MADTKYIFVT…DETVLRKVGL (268 aa). Residue serine 15 coordinates CTP. Serine 15 contacts UTP. An ATP-binding site is contributed by 16–21; that stretch reads SLGKGI. Tyrosine 56 is an L-glutamine binding site. Position 73 (aspartate 73) interacts with ATP. Positions 73 and 143 each coordinate Mg(2+). CTP is bound by residues 150-152, 189-194, and lysine 225; these read DIE and KTKPTQ. Residues 189 to 194 and lysine 225 contribute to the UTP site; that span reads KTKPTQ. In terms of domain architecture, Glutamine amidotransferase type-1 spans 294–536; it reads TIALVGKYVE…IREAIKTRKK (243 aa). Glycine 356 contributes to the L-glutamine binding site. Cysteine 383 functions as the Nucleophile; for glutamine hydrolysis in the catalytic mechanism. L-glutamine-binding positions include 384 to 387, glutamate 407, and arginine 464; that span reads LGMQ. Active-site residues include histidine 509 and glutamate 511.

It belongs to the CTP synthase family. As to quaternary structure, homotetramer.

It carries out the reaction UTP + L-glutamine + ATP + H2O = CTP + L-glutamate + ADP + phosphate + 2 H(+). The enzyme catalyses L-glutamine + H2O = L-glutamate + NH4(+). It catalyses the reaction UTP + NH4(+) + ATP = CTP + ADP + phosphate + 2 H(+). It functions in the pathway pyrimidine metabolism; CTP biosynthesis via de novo pathway; CTP from UDP: step 2/2. With respect to regulation, allosterically activated by GTP, when glutamine is the substrate; GTP has no effect on the reaction when ammonia is the substrate. The allosteric effector GTP functions by stabilizing the protein conformation that binds the tetrahedral intermediate(s) formed during glutamine hydrolysis. Inhibited by the product CTP, via allosteric rather than competitive inhibition. Its function is as follows. Catalyzes the ATP-dependent amination of UTP to CTP with either L-glutamine or ammonia as the source of nitrogen. Regulates intracellular CTP levels through interactions with the four ribonucleotide triphosphates. The chain is CTP synthase from Porphyromonas gingivalis (strain ATCC BAA-308 / W83).